The chain runs to 93 residues: Ferredoxin-2 (93 aa).

A 2Fe-2S ferredoxin-type domain is found at 2–91 (YKVTLKTPDG…DVVIETHKED (90 aa)). 4 residues coordinate [2Fe-2S] cluster: cysteine 37, cysteine 42, cysteine 45, and cysteine 75.

The protein belongs to the 2Fe2S plant-type ferredoxin family. It depends on [2Fe-2S] cluster as a cofactor.

Its subcellular location is the plastid. It is found in the chloroplast. In terms of biological role, ferredoxins are iron-sulfur proteins that transfer electrons in a wide variety of metabolic reactions. In Equisetum arvense (Field horsetail), this protein is Ferredoxin-2.